The sequence spans 441 residues: NADH-quinone oxidoreductase subunit D 1 (441 aa).

Belongs to the complex I 49 kDa subunit family. In terms of assembly, NDH-1 is composed of 14 different subunits. Subunits NuoB, C, D, E, F, and G constitute the peripheral sector of the complex.

The protein localises to the cell membrane. It catalyses the reaction a quinone + NADH + 5 H(+)(in) = a quinol + NAD(+) + 4 H(+)(out). Functionally, NDH-1 shuttles electrons from NADH, via FMN and iron-sulfur (Fe-S) centers, to quinones in the respiratory chain. The immediate electron acceptor for the enzyme in this species is believed to be a menaquinone. Couples the redox reaction to proton translocation (for every two electrons transferred, four hydrogen ions are translocated across the cytoplasmic membrane), and thus conserves the redox energy in a proton gradient. In Salinispora tropica (strain ATCC BAA-916 / DSM 44818 / JCM 13857 / NBRC 105044 / CNB-440), this protein is NADH-quinone oxidoreductase subunit D 1.